Here is a 455-residue protein sequence, read N- to C-terminus: Squamosa promoter-binding-like protein 16 (455 aa).

The SBP-type zinc finger occupies 115–192 (CPSCAVDGCK…DGHNRRRRKP (78 aa)). The Zn(2+) site is built by Cys118, Cys123, Cys140, His143, Cys159, Cys162, His166, and Cys178. A Bipartite nuclear localization signal motif is present at residues 175 to 191 (KRSCRKRLDGHNRRRRK). A disordered region spans residues 182–204 (LDGHNRRRRKPQPDPMNSASYLA).

Expressed in young panicles.

The protein resides in the nucleus. Its function is as follows. Trans-acting factor that binds specifically to the consensus nucleotide sequence 5'-TNCGTACAA-3'. May be involved in panicle development. This Oryza sativa subsp. japonica (Rice) protein is Squamosa promoter-binding-like protein 16 (SPL16).